A 443-amino-acid chain; its full sequence is Trigger factor (443 aa).

A PPIase FKBP-type domain is found at 163–248 (GDTAVIDFEG…INEIKAKELP (86 aa)).

This sequence belongs to the FKBP-type PPIase family. Tig subfamily.

Its subcellular location is the cytoplasm. The catalysed reaction is [protein]-peptidylproline (omega=180) = [protein]-peptidylproline (omega=0). In terms of biological role, involved in protein export. Acts as a chaperone by maintaining the newly synthesized protein in an open conformation. Functions as a peptidyl-prolyl cis-trans isomerase. In Agathobacter rectalis (strain ATCC 33656 / DSM 3377 / JCM 17463 / KCTC 5835 / VPI 0990) (Eubacterium rectale), this protein is Trigger factor.